The chain runs to 157 residues: Transcription elongation factor GreA (157 aa).

This sequence belongs to the GreA/GreB family.

Its function is as follows. Necessary for efficient RNA polymerase transcription elongation past template-encoded arresting sites. The arresting sites in DNA have the property of trapping a certain fraction of elongating RNA polymerases that pass through, resulting in locked ternary complexes. Cleavage of the nascent transcript by cleavage factors such as GreA or GreB allows the resumption of elongation from the new 3'terminus. GreA releases sequences of 2 to 3 nucleotides. The polypeptide is Transcription elongation factor GreA (Hyphomonas neptunium (strain ATCC 15444)).